Reading from the N-terminus, the 265-residue chain is 3-methyl-2-oxobutanoate hydroxymethyltransferase (265 aa).

Residues D46 and D85 each contribute to the Mg(2+) site. Residues 46–47 (DS), D85, and K114 contribute to the 3-methyl-2-oxobutanoate site. E116 is a Mg(2+) binding site. E183 serves as the catalytic Proton acceptor.

It belongs to the PanB family. Homodecamer; pentamer of dimers. The cofactor is Mg(2+).

Its subcellular location is the cytoplasm. The catalysed reaction is 3-methyl-2-oxobutanoate + (6R)-5,10-methylene-5,6,7,8-tetrahydrofolate + H2O = 2-dehydropantoate + (6S)-5,6,7,8-tetrahydrofolate. It functions in the pathway cofactor biosynthesis; coenzyme A biosynthesis. Catalyzes the reversible reaction in which hydroxymethyl group from 5,10-methylenetetrahydrofolate is transferred onto alpha-ketoisovalerate to form ketopantoate. In Pyrobaculum calidifontis (strain DSM 21063 / JCM 11548 / VA1), this protein is 3-methyl-2-oxobutanoate hydroxymethyltransferase.